A 282-amino-acid polypeptide reads, in one-letter code: RsbT co-antagonist protein RsbRC (282 aa).

2 positions are modified to phosphoserine: Ser-165 and Ser-174. An STAS domain is found at 165-276 (SAPVIVLFHS…STLASAIASD (112 aa)). At Thr-186 the chain carries Phosphothreonine.

As to quaternary structure, probably present in the stressosome with RsbRA, RsbRB, RsbRD and RsbS. In terms of processing, phosphorylated by RsbT.

In terms of biological role, one of 4 functionally non-identical RsbR paralogs, it functions in the environmental signaling branch of the general stress response. Functionally, negative regulator of sigma-B activity. Non-phosphorylated RsbS binds to RsbT, preventing its association with RsbU. Requires any one of RsbRA, RsbRB, RsbRC or RsbRD to sequester RsbT. When RsbS and the RsbR paralog(s) are phosphorylated, they release RsbT, which can then bind and activate RsbU. In Bacillus subtilis (strain 168), this protein is RsbT co-antagonist protein RsbRC (rsbRC).